The chain runs to 418 residues: Thermolabile hemolysin (418 aa).

The signal sequence occupies residues 1–19; it reads MMKKTITLLTALLPLASAV. The active-site Nucleophile is Ser-153. Active-site residues include Asp-390 and His-393.

It belongs to the 'GDSL' lipolytic enzyme family. Post-translationally, there are two forms of LDH. The LDH(S) may be a protein in which 13 residues of the N-terminal of LDH(L) are deleted.

The protein localises to the secreted. Functionally, phospholipase hydrolyzing both fatty acid esters of phospholipid, i.e. it hydrolyzes phosphatidylcholine (PC) to lysophosphatidylcholine (LPC) and then LPC to glycerophosphorylcholine (GPC). The chain is Thermolabile hemolysin from Vibrio parahaemolyticus serotype O3:K6 (strain RIMD 2210633).